We begin with the raw amino-acid sequence, 294 residues long: Glutamyl-Q tRNA(Asp) synthetase (294 aa).

Residues 7–11 (RFAPS) and Glu-43 contribute to the L-glutamate site. Positions 10–20 (PSPSGPLHFGS) match the 'HIGH' region motif. Cys-99, Cys-101, Tyr-113, and Cys-117 together coordinate Zn(2+). 2 residues coordinate L-glutamate: Tyr-168 and Arg-186. A 'KMSKS' region motif is present at residues 224-228 (KLSKQ). Lys-227 is a binding site for ATP.

Belongs to the class-I aminoacyl-tRNA synthetase family. GluQ subfamily. It depends on Zn(2+) as a cofactor.

Catalyzes the tRNA-independent activation of glutamate in presence of ATP and the subsequent transfer of glutamate onto a tRNA(Asp). Glutamate is transferred on the 2-amino-5-(4,5-dihydroxy-2-cyclopenten-1-yl) moiety of the queuosine in the wobble position of the QUC anticodon. The polypeptide is Glutamyl-Q tRNA(Asp) synthetase (Vibrio parahaemolyticus serotype O3:K6 (strain RIMD 2210633)).